The chain runs to 501 residues: Lysine--tRNA ligase (501 aa).

Mg(2+)-binding residues include Glu402 and Glu409.

Belongs to the class-II aminoacyl-tRNA synthetase family. In terms of assembly, homodimer. It depends on Mg(2+) as a cofactor.

It is found in the cytoplasm. It catalyses the reaction tRNA(Lys) + L-lysine + ATP = L-lysyl-tRNA(Lys) + AMP + diphosphate. The sequence is that of Lysine--tRNA ligase from Helicobacter pylori (strain G27).